Here is a 386-residue protein sequence, read N- to C-terminus: Lipoyl synthase, mitochondrial (386 aa).

Residues 1 to 48 (MHGRRHLAASLTRALTQAPSRSISSTPSLLQTLDPSVPSPSPPPAAEP) are disordered. The segment covering 13–34 (RALTQAPSRSISSTPSLLQTLD) has biased composition (polar residues). Over residues 37 to 46 (VPSPSPPPAA) the composition is skewed to pro residues. Residues cysteine 113, cysteine 118, cysteine 124, cysteine 144, cysteine 148, cysteine 151, and serine 360 each contribute to the [4Fe-4S] cluster site. A Radical SAM core domain is found at 129 to 349 (ETGTATATIM…RALGVEMGFR (221 aa)).

It belongs to the radical SAM superfamily. Lipoyl synthase family. It depends on [4Fe-4S] cluster as a cofactor.

The protein resides in the mitochondrion. The catalysed reaction is [[Fe-S] cluster scaffold protein carrying a second [4Fe-4S](2+) cluster] + N(6)-octanoyl-L-lysyl-[protein] + 2 oxidized [2Fe-2S]-[ferredoxin] + 2 S-adenosyl-L-methionine + 4 H(+) = [[Fe-S] cluster scaffold protein] + N(6)-[(R)-dihydrolipoyl]-L-lysyl-[protein] + 4 Fe(3+) + 2 hydrogen sulfide + 2 5'-deoxyadenosine + 2 L-methionine + 2 reduced [2Fe-2S]-[ferredoxin]. It functions in the pathway protein modification; protein lipoylation via endogenous pathway; protein N(6)-(lipoyl)lysine from octanoyl-[acyl-carrier-protein]: step 2/2. Its function is as follows. Catalyzes the radical-mediated insertion of two sulfur atoms into the C-6 and C-8 positions of the octanoyl moiety bound to the lipoyl domains of lipoate-dependent enzymes, thereby converting the octanoylated domains into lipoylated derivatives. The protein is Lipoyl synthase, mitochondrial of Sorghum bicolor (Sorghum).